A 180-amino-acid chain; its full sequence is UPF0134 protein MPN_127 (180 aa).

The protein belongs to the UPF0134 family.

The polypeptide is UPF0134 protein MPN_127 (Mycoplasma pneumoniae (strain ATCC 29342 / M129 / Subtype 1) (Mycoplasmoides pneumoniae)).